Here is a 218-residue protein sequence, read N- to C-terminus: Sodium channel regulatory subunit beta-1 (218 aa).

A signal peptide spans methionine 1 to tryptophan 18. Residues glycine 19–isoleucine 157 are Extracellular-facing. 2 disulfides stabilise this stretch: cysteine 21-cysteine 43 and cysteine 40-cysteine 121. The 129-residue stretch at valine 22 to alanine 150 folds into the Ig-like C2-type domain. Residues asparagine 93, asparagine 110, asparagine 114, and asparagine 135 are each glycosylated (N-linked (GlcNAc...) asparagine). A helical membrane pass occupies residues valine 158–valine 179. Residues tyrosine 180 to glutamate 218 lie on the Cytoplasmic side of the membrane.

This sequence belongs to the sodium channel auxiliary subunit SCN1B (TC 8.A.17) family. As to quaternary structure, a voltage-gated sodium (Nav) channel consists of an ion-conducting pore-forming alpha subunit functional on its own that is regulated by one or more beta subunits. Interacts with SCN1A; regulatory subunit of SCN1A/Nav1.1. Interacts with SCN3A; regulatory subunit of SCN3A/Nav1.3. Interacts with SCN4A; regulatory subunit of SCN4A/Nav1.4. Interacts with SCN5A; regulatory subunit of SCN5A/Nav1.5. Interacts with SCN8A; regulatory subunit of SCN8A/Nav1.6. Interacts with SCN9A; regulatory subunit of SCN9A/Nav1.7. Interacts with SCN10A; regulatory subunit of SCN10A/Nav1.8. Interacts with NFASC. Interacts with TMEM65.

It is found in the cell membrane. Its subcellular location is the perikaryon. The protein resides in the cell projection. It localises to the axon. Its function is as follows. Regulatory subunit of multiple voltage-gated sodium (Nav) channels directly mediating the depolarization of excitable membranes. Navs, also called VGSCs (voltage-gated sodium channels) or VDSCs (voltage-dependent sodium channels), operate by switching between closed and open conformations depending on the voltage difference across the membrane. In the open conformation they allow Na(+) ions to selectively pass through the pore, along their electrochemical gradient. The influx of Na+ ions provokes membrane depolarization, initiating the propagation of electrical signals throughout cells and tissues. The accessory beta subunits participate in localization and functional modulation of the Nav channels. Modulates the activity of SCN1A/Nav1.1, SCN2A/Nav1.2, SCN3A/Nav1.3, SCN4A/Nav1.4, SCN5A/Nav1.5, SCN8A/Nav1.6, SCN9A/Nav1.7 and SCN10A/Nav1.8. The polypeptide is Sodium channel regulatory subunit beta-1 (Oryctolagus cuniculus (Rabbit)).